A 309-amino-acid polypeptide reads, in one-letter code: MEKRIQQASKFGKVAVLMGGSAAEREISLKSGKAVLEALRSGGIDAEGIDVGRDLIAPLLERRFDRVFNVIHGRGGEDGVLQGALACLRVPCTGSGVLASALSMDKLRTKLCWTGAGLPTPPWLRLDSPDDLERCRQALGFPVIVKPAEEGSSIGMSRAATAEELAQAWERASGYGCAVFAERWIDGVEYTGGMLKGVPLPLIRLETPHAFYDFDAKYRADTTRYHCPCGLDTGREAELQALVLRACQIVGVSGWGRVDLLVDRSGQPWLIEVNTVPGMTDHSLVPMAAKAAGIDFQELVWHILETSFA.

One can recognise an ATP-grasp domain in the interval 110 to 305 (KLCWTGAGLP…FQELVWHILE (196 aa)). 136 to 191 (RQALGFPVIVKPAEEGSSIGMSRAATAEELAQAWERASGYGCAVFAERWIDGVEYT) contributes to the ATP binding site. Residues D259, E272, and N274 each coordinate Mg(2+).

It belongs to the D-alanine--D-alanine ligase family. It depends on Mg(2+) as a cofactor. Requires Mn(2+) as cofactor.

It localises to the cytoplasm. It catalyses the reaction 2 D-alanine + ATP = D-alanyl-D-alanine + ADP + phosphate + H(+). The protein operates within cell wall biogenesis; peptidoglycan biosynthesis. In terms of biological role, cell wall formation. The sequence is that of D-alanine--D-alanine ligase from Methylococcus capsulatus (strain ATCC 33009 / NCIMB 11132 / Bath).